A 199-amino-acid polypeptide reads, in one-letter code: Female-specific protein transformer (199 aa).

2 disordered regions span residues 1–121 (MDAD…RTPR) and 178–199 (YRAG…QAPN). Basic and acidic residues predominate over residues 20 to 37 (REKMPYFADEVRERDRVR). Composition is skewed to basic residues over residues 56–69 (RRSR…RSRT), 77–92 (CQRR…RSGS), and 102–119 (SRRR…RSRT).

The protein resides in the nucleus speckle. Functionally, member of the regulatory pathway controlling female somatic sexual differentiation, regulated by Sxl. Activates dsx female-specific splicing by promoting the formation of a splicing enhancer complex which consists of tra, tra2 and sr proteins. This is Female-specific protein transformer (tra) from Drosophila virilis (Fruit fly).